A 451-amino-acid chain; its full sequence is V-type proton ATPase subunit S1 (451 aa).

The N-terminal stretch at 1 to 16 (MRVLFAVFSLIMACQA) is a signal peptide. The Lumenal segment spans residues 17 to 407 (YDAVLFSNSR…DCTGTFSSGS (391 aa)). N191, N235, N249, and N330 each carry an N-linked (GlcNAc...) asparagine glycan. A helical membrane pass occupies residues 408 to 428 (WMGIVSALVLIAGLMFGYVML). The Cytoplasmic segment spans residues 429–451 (QSVQTMDRFDDPKQRQIVINVRE).

It belongs to the vacuolar ATPase subunit S1 family. Accessory component of the multisubunit proton-transporting vacuolar (V)-ATPase protein pump. In terms of tissue distribution, expressed in pharynx, hypodermis, intestine, vulval hypodermis and the H-shape excretory cell.

It is found in the membrane. Its function is as follows. Accessory subunit of the proton-transporting vacuolar (V)-ATPase protein pump, which is required for luminal acidification of secretory vesicles. In the germline, required for the trafficking of the receptor RME-2 to the oocyte cell membrane where it regulates the uptake of yolk proteins. Also, plays an essential role in osmoregulation in the embryo, probably by regulating the proper formation of the eggshell. The protein is V-type proton ATPase subunit S1 of Caenorhabditis elegans.